The sequence spans 55 residues: Omega-ctenitoxin-Pr2a (55 aa).

5 cysteine pairs are disulfide-bonded: Cys2–Cys16, Cys9–Cys22, Cys15–Cys37, Cys24–Cys35, and Cys45–Cys52.

In terms of tissue distribution, expressed by the venom gland.

The protein resides in the secreted. Functionally, antagonist of L-type calcium channels (Cav1/CACNA1). In vivo, causes paralysis in posterior limbs, and gradual decrease in movement and aggression during 24 hours after intracerebroventricular injection in mice at dose levels of 3 ug per mouse. This is Omega-ctenitoxin-Pr2a from Phoneutria reidyi (Brazilian Amazonian armed spider).